Here is a 501-residue protein sequence, read N- to C-terminus: Glycerol kinase (501 aa).

ADP is bound at residue Thr12. ATP is bound by residues Thr12, Thr13, and Ser14. Thr12 is a sn-glycerol 3-phosphate binding site. Arg16 serves as a coordination point for ADP. Sn-glycerol 3-phosphate is bound by residues Arg82, Glu83, Tyr134, and Asp244. Glycerol contacts are provided by Arg82, Glu83, Tyr134, Asp244, and Gln245. ADP contacts are provided by Thr266 and Gly310. ATP-binding residues include Thr266, Gly310, Gln314, and Gly411. ADP-binding residues include Gly411 and Asn415.

Belongs to the FGGY kinase family.

It carries out the reaction glycerol + ATP = sn-glycerol 3-phosphate + ADP + H(+). It functions in the pathway polyol metabolism; glycerol degradation via glycerol kinase pathway; sn-glycerol 3-phosphate from glycerol: step 1/1. Inhibited by fructose 1,6-bisphosphate (FBP). Key enzyme in the regulation of glycerol uptake and metabolism. Catalyzes the phosphorylation of glycerol to yield sn-glycerol 3-phosphate. The sequence is that of Glycerol kinase from Methylorubrum extorquens (strain PA1) (Methylobacterium extorquens).